The sequence spans 518 residues: Chromosomal replication initiator protein DnaA (518 aa).

A domain I, interacts with DnaA modulators region spans residues 1 to 73 (MTLAEFWPLC…REELAAGRPA (73 aa)). Positions 73–180 (AFVFKPGEGV…DAEEARYEQT (108 aa)) are domain II. The tract at residues 144 to 180 (HEPRQAAGPASRPESAAVAKARTDAQRDAEEARYEQT) is disordered. The span at 164–177 (ARTDAQRDAEEARY) shows a compositional bias: basic and acidic residues. The tract at residues 181–397 (NLSPDYTFDT…GAFNRVGASS (217 aa)) is domain III, AAA+ region. The ATP site is built by G225, G227, K228, and T229. The tract at residues 398–518 (RFMNRPVIDI…YEKLLILIQN (121 aa)) is domain IV, binds dsDNA.

This sequence belongs to the DnaA family. As to quaternary structure, oligomerizes as a right-handed, spiral filament on DNA at oriC.

The protein resides in the cytoplasm. In terms of biological role, plays an essential role in the initiation and regulation of chromosomal replication. ATP-DnaA binds to the origin of replication (oriC) to initiate formation of the DNA replication initiation complex once per cell cycle. Binds the DnaA box (a 9 base pair repeat at the origin) and separates the double-stranded (ds)DNA. Forms a right-handed helical filament on oriC DNA; dsDNA binds to the exterior of the filament while single-stranded (ss)DNA is stabiized in the filament's interior. The ATP-DnaA-oriC complex binds and stabilizes one strand of the AT-rich DNA unwinding element (DUE), permitting loading of DNA polymerase. After initiation quickly degrades to an ADP-DnaA complex that is not apt for DNA replication. Binds acidic phospholipids. The sequence is that of Chromosomal replication initiator protein DnaA from Neisseria gonorrhoeae (strain ATCC 700825 / FA 1090).